A 381-amino-acid polypeptide reads, in one-letter code: Cobalt-precorrin-5B C(1)-methyltransferase (381 aa).

Belongs to the CbiD family.

The catalysed reaction is Co-precorrin-5B + S-adenosyl-L-methionine = Co-precorrin-6A + S-adenosyl-L-homocysteine. It participates in cofactor biosynthesis; adenosylcobalamin biosynthesis; cob(II)yrinate a,c-diamide from sirohydrochlorin (anaerobic route): step 6/10. In terms of biological role, catalyzes the methylation of C-1 in cobalt-precorrin-5B to form cobalt-precorrin-6A. The protein is Cobalt-precorrin-5B C(1)-methyltransferase of Prochlorococcus marinus (strain SARG / CCMP1375 / SS120).